Reading from the N-terminus, the 156-residue chain is MPRRREVPKRVILPDPKYNDKTVAKLINILMVGGKKSVAESILYRALDIVESKSGEEAVKALKKCLDNIKPALEVKSRRVGGSTYQVPVEVRPDRRVSLAMRWLIKYSAARSEKTMTEKMAGEILDAFNSRGAAVKKREDTHKMAEANRAFAHYRW.

Belongs to the universal ribosomal protein uS7 family. Part of the 30S ribosomal subunit. Contacts proteins S9 and S11.

In terms of biological role, one of the primary rRNA binding proteins, it binds directly to 16S rRNA where it nucleates assembly of the head domain of the 30S subunit. Is located at the subunit interface close to the decoding center, probably blocks exit of the E-site tRNA. This chain is Small ribosomal subunit protein uS7, found in Trichlorobacter lovleyi (strain ATCC BAA-1151 / DSM 17278 / SZ) (Geobacter lovleyi).